Here is a 309-residue protein sequence, read N- to C-terminus: Lipoyl synthase (309 aa).

7 residues coordinate [4Fe-4S] cluster: C56, C61, C67, C82, C86, C89, and S296. The region spanning 68–285 (FKRGTATFMI…RVAGLKMGFS (218 aa)) is the Radical SAM core domain.

Belongs to the radical SAM superfamily. Lipoyl synthase family. The cofactor is [4Fe-4S] cluster.

The protein resides in the cytoplasm. It catalyses the reaction [[Fe-S] cluster scaffold protein carrying a second [4Fe-4S](2+) cluster] + N(6)-octanoyl-L-lysyl-[protein] + 2 oxidized [2Fe-2S]-[ferredoxin] + 2 S-adenosyl-L-methionine + 4 H(+) = [[Fe-S] cluster scaffold protein] + N(6)-[(R)-dihydrolipoyl]-L-lysyl-[protein] + 4 Fe(3+) + 2 hydrogen sulfide + 2 5'-deoxyadenosine + 2 L-methionine + 2 reduced [2Fe-2S]-[ferredoxin]. It functions in the pathway protein modification; protein lipoylation via endogenous pathway; protein N(6)-(lipoyl)lysine from octanoyl-[acyl-carrier-protein]: step 2/2. Catalyzes the radical-mediated insertion of two sulfur atoms into the C-6 and C-8 positions of the octanoyl moiety bound to the lipoyl domains of lipoate-dependent enzymes, thereby converting the octanoylated domains into lipoylated derivatives. The protein is Lipoyl synthase of Syntrophotalea carbinolica (strain DSM 2380 / NBRC 103641 / GraBd1) (Pelobacter carbinolicus).